The following is a 353-amino-acid chain: Protein-arginine kinase (353 aa).

The region spanning 24–256 (IVLSSRIRLA…RTVIDTEEQA (233 aa)) is the Phosphagen kinase C-terminal domain. ATP is bound by residues 27–31 (SSRIR), His-93, Arg-127, 178–182 (RASVM), and 209–214 (RGLYGE). The RDXXRA motif of the pArg binding pocket involved in allosteric regulation signature appears at 339 to 344 (RDVRRA).

It belongs to the ATP:guanido phosphotransferase family.

The enzyme catalyses L-arginyl-[protein] + ATP = N(omega)-phospho-L-arginyl-[protein] + ADP + H(+). Appears to be allosterically activated by the binding of pArg-containing polypeptides to the pArg-binding pocket localized in the C-terminal domain of McsB. Catalyzes the specific phosphorylation of arginine residues in proteins. The sequence is that of Protein-arginine kinase from Symbiobacterium thermophilum (strain DSM 24528 / JCM 14929 / IAM 14863 / T).